The chain runs to 390 residues: Probable splicing factor YJU2B (390 aa).

The interval 354-390 (DACKASSSSEEENSIDSCATGKSLVADYSDSDSGSEV) is disordered.

Belongs to the CWC16 family.

It localises to the nucleus. Its function is as follows. May be involved in mRNA splicing. This is Probable splicing factor YJU2B (yju2b) from Danio rerio (Zebrafish).